The primary structure comprises 434 residues: Elongation factor 1-alpha (434 aa).

Residues 5 to 232 (KPHINLVVIG…DNVHPPKRPV (228 aa)) enclose the tr-type G domain. Positions 14–21 (GHVVAGKS) are G1. Residue 14–21 (GHVVAGKS) coordinates GTP. The interval 70 to 74 (GITID) is G2. Residues 91–94 (DAPG) are G3. GTP contacts are provided by residues 91–95 (DAPGH) and 153–156 (NKMD). Positions 153–156 (NKMD) are G4. Residues 196–198 (SGF) are G5.

This sequence belongs to the TRAFAC class translation factor GTPase superfamily. Classic translation factor GTPase family. EF-Tu/EF-1A subfamily.

It localises to the cytoplasm. In terms of biological role, this protein promotes the GTP-dependent binding of aminoacyl-tRNA to the A-site of ribosomes during protein biosynthesis. The sequence is that of Elongation factor 1-alpha from Blastocystis hominis.